A 210-amino-acid polypeptide reads, in one-letter code: Probable GTP-binding protein EngB (210 aa).

Residues 25–199 (TGIEVAFAGR…RQKLDTWFSE (175 aa)) enclose the EngB-type G domain. Residues 33–40 (GRSNAGKS), 60–64 (GRTQL), 78–81 (DLPG), 145–148 (TKAD), and 178–180 (FSS) each bind GTP. The Mg(2+) site is built by Ser40 and Thr62.

This sequence belongs to the TRAFAC class TrmE-Era-EngA-EngB-Septin-like GTPase superfamily. EngB GTPase family. Mg(2+) serves as cofactor.

In terms of biological role, necessary for normal cell division and for the maintenance of normal septation. The chain is Probable GTP-binding protein EngB from Shigella boydii serotype 4 (strain Sb227).